A 428-amino-acid polypeptide reads, in one-letter code: Stromal membrane-associated protein 2 (428 aa).

An Arf-GAP domain is found at 13–139 (QAVLGSLLSE…INTFRKEKDD (127 aa)). The C4-type zinc-finger motif lies at 28 to 51 (CADCQAKGPRWASWNIGVFICIRC). Over residues 161-172 (VKMPQKKEETQQ) the composition is skewed to basic and acidic residues. 2 disordered regions span residues 161 to 182 (VKMPQKKEETQQSRKSSPKSTE) and 222 to 258 (SRKVSGSMPTSGSAGSVPENLNLFPEPGGKGEEAGKK).

As to quaternary structure, may interact with clathrin heavy chains.

Functionally, GTPase activating protein. May play a role in clathrin-dependent retrograde transport from early endosomes to the trans-Golgi network. The chain is Stromal membrane-associated protein 2 (SMAP2) from Gallus gallus (Chicken).